We begin with the raw amino-acid sequence, 508 residues long: Photosystem II CP47 reaction center protein (508 aa).

6 helical membrane-spanning segments follow: residues 21 to 36 (AVHI…WAGS), 101 to 115 (IVFS…IWHW), 140 to 156 (GIHL…FGAF), 203 to 218 (IAAG…FHLS), 237 to 252 (VLSS…AFVV), and 457 to 472 (SFAL…HGSR).

The protein belongs to the PsbB/PsbC family. PsbB subfamily. PSII is composed of 1 copy each of membrane proteins PsbA, PsbB, PsbC, PsbD, PsbE, PsbF, PsbH, PsbI, PsbJ, PsbK, PsbL, PsbM, PsbT, PsbX, PsbY, PsbZ, Psb30/Ycf12, at least 3 peripheral proteins of the oxygen-evolving complex and a large number of cofactors. It forms dimeric complexes. Binds multiple chlorophylls. PSII binds additional chlorophylls, carotenoids and specific lipids. is required as a cofactor.

It localises to the plastid. It is found in the chloroplast thylakoid membrane. Its function is as follows. One of the components of the core complex of photosystem II (PSII). It binds chlorophyll and helps catalyze the primary light-induced photochemical processes of PSII. PSII is a light-driven water:plastoquinone oxidoreductase, using light energy to abstract electrons from H(2)O, generating O(2) and a proton gradient subsequently used for ATP formation. This Populus trichocarpa (Western balsam poplar) protein is Photosystem II CP47 reaction center protein.